The primary structure comprises 1017 residues: GPI ethanolamine phosphate transferase 3 (1017 aa).

The chain crosses the membrane as a helical span at residues 34–54; it reads FYIILLVFIAILQFISIAFFT. N-linked (GlcNAc...) asparagine glycans are attached at residues Asn66, Asn71, Asn100, Asn182, and Asn203. The chain crosses the membrane as a helical span at residues 347-367; that stretch reads VSSLALLMGQPIPFNNLGWPI. A glycan (N-linked (GlcNAc...) asparagine) is linked at Asn411. The next 6 membrane-spanning stretches (helical) occupy residues 457–477, 484–504, 515–535, 558–578, 582–602, and 644–664; these read LLATSLVLLISITKLIPSIVV, FVPGIIIMVLVTNLCFHGIFY, FWGTLLATAIGIIIGCYITIF, IAVMFMIIHALLFTSNSFTIW, IVAFLLSTFGMLTLYEFVFLP, and LGGYHSAVLIIFTRLASMITI. N-linked (GlcNAc...) asparagine glycans are attached at residues Asn681 and Asn682. Residues 685–705 form a helical membrane-spanning segment; that stretch reads WWVLGLCFLMIFILPACITGY. Asn707 is a glycosylation site (N-linked (GlcNAc...) asparagine). A helical transmembrane segment spans residues 715–735; it reads AAPIWINVFLKGILGLNFVYW. Residue Asn742 is glycosylated (N-linked (GlcNAc...) asparagine). A run of 6 helical transmembrane segments spans residues 765–785, 806–826, 829–849, 903–923, 947–967, and 981–1001; these read IIAGFSLIASNVGWLMGPLCI, NIYGSEFFLLVINVLISILLF, PLAQLSYFLMCNQLLSILEII, IAIILNTFGPHILVSLSVALL, GILLTYNTILCLSSFIWVTHF, and FIFASLSLIVTQLVVTFGTIA.

It belongs to the PIGG/PIGN/PIGO family. PIGO subfamily. Post-translationally, glycosylated.

The protein localises to the endoplasmic reticulum membrane. It participates in glycolipid biosynthesis; glycosylphosphatidylinositol-anchor biosynthesis. In terms of biological role, involved in glycosylphosphatidylinositol-anchor biosynthesis. Transfers ethanolamine phosphate to the GPI third mannose which links the GPI-anchor to the C-terminus of the proteins by an amide bond. Involved in cell wall biosynthesis. The sequence is that of GPI ethanolamine phosphate transferase 3 (GPI13) from Saccharomyces cerevisiae (strain ATCC 204508 / S288c) (Baker's yeast).